A 238-amino-acid polypeptide reads, in one-letter code: Leucyl/phenylalanyl-tRNA--protein transferase (238 aa).

Belongs to the L/F-transferase family.

The protein localises to the cytoplasm. It catalyses the reaction N-terminal L-lysyl-[protein] + L-leucyl-tRNA(Leu) = N-terminal L-leucyl-L-lysyl-[protein] + tRNA(Leu) + H(+). The enzyme catalyses N-terminal L-arginyl-[protein] + L-leucyl-tRNA(Leu) = N-terminal L-leucyl-L-arginyl-[protein] + tRNA(Leu) + H(+). The catalysed reaction is L-phenylalanyl-tRNA(Phe) + an N-terminal L-alpha-aminoacyl-[protein] = an N-terminal L-phenylalanyl-L-alpha-aminoacyl-[protein] + tRNA(Phe). Functions in the N-end rule pathway of protein degradation where it conjugates Leu, Phe and, less efficiently, Met from aminoacyl-tRNAs to the N-termini of proteins containing an N-terminal arginine or lysine. In Pseudoalteromonas translucida (strain TAC 125), this protein is Leucyl/phenylalanyl-tRNA--protein transferase.